The chain runs to 212 residues: Acyl-homoserine-lactone synthase (212 aa).

Belongs to the autoinducer synthase family.

It carries out the reaction a fatty acyl-[ACP] + S-adenosyl-L-methionine = an N-acyl-L-homoserine lactone + S-methyl-5'-thioadenosine + holo-[ACP] + H(+). In terms of biological role, required for the synthesis of autoinducer molecules which bind to RaiR and that are involved in the restriction of nodule number. This is Acyl-homoserine-lactone synthase (raiI) from Rhizobium etli.